Reading from the N-terminus, the 429-residue chain is 4-hydroxy-3-methylbut-2-en-1-yl diphosphate synthase (flavodoxin) (429 aa).

Positions 310, 313, 356, and 363 each coordinate [4Fe-4S] cluster.

This sequence belongs to the IspG family. The cofactor is [4Fe-4S] cluster.

The catalysed reaction is (2E)-4-hydroxy-3-methylbut-2-enyl diphosphate + oxidized [flavodoxin] + H2O + 2 H(+) = 2-C-methyl-D-erythritol 2,4-cyclic diphosphate + reduced [flavodoxin]. Its pathway is isoprenoid biosynthesis; isopentenyl diphosphate biosynthesis via DXP pathway; isopentenyl diphosphate from 1-deoxy-D-xylulose 5-phosphate: step 5/6. In terms of biological role, converts 2C-methyl-D-erythritol 2,4-cyclodiphosphate (ME-2,4cPP) into 1-hydroxy-2-methyl-2-(E)-butenyl 4-diphosphate. This is 4-hydroxy-3-methylbut-2-en-1-yl diphosphate synthase (flavodoxin) from Bradyrhizobium sp. (strain BTAi1 / ATCC BAA-1182).